The following is a 525-amino-acid chain: MKPHLKQWRQRMLFAIFVWGLLFLAIFIYFTNSNPAAPMPSSFSFLESRGLLPVQGKQRVIMGALQEPSLPRSLEPSKVLMDGHSASPFNSWPGDPQKGDQAQDGFDNGDEFFTSQVGRKSQSAFYPEEDNYFFVAGQPGLYHHRQGALGLPSPGESSWQSGPGQPKQEKLRHPRRGSLPEEAYDSDMLSTSMSRAFLYRLWKGTVSSKMLNPRLQKAMRYYMSFNKHGVRFSRRGRREARRTGPELLCEMRKRVRVRTLDGKEAPFSGLGWRPLVPGVPLSQLHPRGLRSCAVVMSAGAILNSSLGEEIDSHDAVLRFNSAPTRGYEKDVGNKTTVRIINSQILANPSHHFIDSSLYKDVILVAWDPAPYSANLNLWYKKPDYNLFTPYIQHRLKYPTQPFYILHPKFIWQLWDIIQENTREKIQPNPPSSGFIGILVMMSMCQEVHVYEYIPSVRQTELCHYHELYYDAACTLGAYHPLLYEKLLVQRLNTGTQADLHHKGKVVLPGFQTLRCPVTRPNNTNT.

Over 1–11 (MKPHLKQWRQR) the chain is Cytoplasmic. The helical; Signal-anchor for type II membrane protein transmembrane segment at 12–32 (MLFAIFVWGLLFLAIFIYFTN) threads the bilayer. Over 33–525 (SNPAAPMPSS…PVTRPNNTNT (493 aa)) the chain is Lumenal. Disordered stretches follow at residues 85–107 (SASP…DGFD) and 145–183 (RQGA…PEEA). Disulfide bonds link Cys-249–Cys-515, Cys-292–Cys-444, and Cys-462–Cys-473. N-linked (GlcNAc...) asparagine glycosylation is found at Asn-303 and Asn-333. The N-linked (GlcNAc...) asparagine glycan is linked to Asn-521.

It belongs to the glycosyltransferase 29 family.

It is found in the golgi apparatus. It localises to the golgi stack membrane. The catalysed reaction is a beta-D-galactoside + CMP-N-acetyl-beta-neuraminate = an N-acetyl-alpha-neuraminyl-(2-&gt;6)-beta-D-galactosyl derivative + CMP + H(+). Its function is as follows. Transfers sialic acid from the donor of substrate CMP-sialic acid to galactose containing acceptor substrates. Has alpha-2,6-sialyltransferase activity toward oligosaccharides that have the Gal-beta-1,4-GlcNAc sequence at the non-reducing end of their carbohydrate groups, but it has weak or no activities toward glycoproteins and glycolipids. This is Beta-galactoside alpha-2,6-sialyltransferase 2 (St6gal2) from Rattus norvegicus (Rat).